A 262-amino-acid polypeptide reads, in one-letter code: Flap endonuclease Xni (262 aa).

Residue aspartate 105 coordinates Mg(2+). Positions 164–251 (SQFLDLMALA…NINLKDFRAN (88 aa)) constitute a 5'-3' exonuclease domain. K(+) contacts are provided by leucine 172, alanine 173, proline 181, isoleucine 183, and isoleucine 186. Positions 185–190 (GIGPKS) are interaction with DNA.

It belongs to the Xni family. It depends on Mg(2+) as a cofactor. K(+) is required as a cofactor.

Its function is as follows. Has flap endonuclease activity. During DNA replication, flap endonucleases cleave the 5'-overhanging flap structure that is generated by displacement synthesis when DNA polymerase encounters the 5'-end of a downstream Okazaki fragment. In Shewanella putrefaciens (strain CN-32 / ATCC BAA-453), this protein is Flap endonuclease Xni.